Reading from the N-terminus, the 362-residue chain is MLVPPANFGIAEEGIYRCSKVETLNLSFLETLNLKTAIFIGGQEPSKFFKDFFTRSSIKWIVLRMSDFSAAAVPVKSSSVSNANLYSNNNSTLSLQEEKKKSTANGSQNSTTGDPVIQEELAYHLTDNDDLMLIKSTCLKRTFKTLLNVDNYNVLLVDKTALVIGILRKIQKWNIASIINEYRLFSGKNRNYFAETFLEIINIEIEQEKDNKTIVDNKAKKLPLENNRTHSIEYKANSGKLIRVNEDDLCREPEVPQRLLTLINQIETKVKNNKVLQVSGVLGDDLKKTSSDLGIFGHRYRLAFNKKENGDYGYYKARGKDNVKIRIPCDSELPDWFRFQRDLWEKENVPEEHHFYREHIFT.

In terms of biological role, required for replication of Brome mosaic virus (BMV). The chain is Protein OCA4 (OCA4) from Saccharomyces cerevisiae (strain ATCC 204508 / S288c) (Baker's yeast).